A 204-amino-acid polypeptide reads, in one-letter code: Large ribosomal subunit protein uL4 (204 aa).

The tract at residues 44-76 is disordered; that stretch reads KRQGTQSAKTRSEVRGGGIKPWRQKGTGRARQG.

It belongs to the universal ribosomal protein uL4 family. As to quaternary structure, part of the 50S ribosomal subunit.

In terms of biological role, one of the primary rRNA binding proteins, this protein initially binds near the 5'-end of the 23S rRNA. It is important during the early stages of 50S assembly. It makes multiple contacts with different domains of the 23S rRNA in the assembled 50S subunit and ribosome. Its function is as follows. Forms part of the polypeptide exit tunnel. The protein is Large ribosomal subunit protein uL4 of Clostridium perfringens (strain ATCC 13124 / DSM 756 / JCM 1290 / NCIMB 6125 / NCTC 8237 / Type A).